A 92-amino-acid polypeptide reads, in one-letter code: Small ribosomal subunit protein uS19c (92 aa).

It belongs to the universal ribosomal protein uS19 family.

The protein resides in the plastid. It localises to the chloroplast. Functionally, protein S19 forms a complex with S13 that binds strongly to the 16S ribosomal RNA. This Huperzia lucidula (Shining clubmoss) protein is Small ribosomal subunit protein uS19c.